The following is a 652-amino-acid chain: tRNA-guanine(15) transglycosylase (652 aa).

Asp-88 (nucleophile) is an active-site residue. Substrate is bound by residues Asp-123 and Ala-194. 3 residues coordinate Zn(2+): Cys-280, Cys-282, and Cys-285. Positions 577–652 constitute a PUA domain; the sequence is KYRVVIDSEV…AAVSVRSGFK (76 aa).

This sequence belongs to the archaeosine tRNA-ribosyltransferase family. Zn(2+) is required as a cofactor.

The enzyme catalyses guanosine(15) in tRNA + 7-cyano-7-deazaguanine = 7-cyano-7-carbaguanosine(15) in tRNA + guanine. Its pathway is tRNA modification; archaeosine-tRNA biosynthesis. Its function is as follows. Exchanges the guanine residue with 7-cyano-7-deazaguanine (preQ0) at position 15 in the dihydrouridine loop (D-loop) of archaeal tRNAs. The sequence is that of tRNA-guanine(15) transglycosylase from Methanococcus aeolicus (strain ATCC BAA-1280 / DSM 17508 / OCM 812 / Nankai-3).